Here is an 85-residue protein sequence, read N- to C-terminus: Putative membrane protein insertion efficiency factor (85 aa).

Belongs to the UPF0161 family.

The protein localises to the cell inner membrane. In terms of biological role, could be involved in insertion of integral membrane proteins into the membrane. The chain is Putative membrane protein insertion efficiency factor from Vibrio atlanticus (strain LGP32) (Vibrio splendidus (strain Mel32)).